Here is a 63-residue protein sequence, read N- to C-terminus: Arabinogalactan protein 41 (63 aa).

The first 27 residues, 1-27, serve as a signal peptide directing secretion; sequence MSGSRLFFGVSTIVSIIFAILLPMAHA. Residue Q28 is modified to Pyrrolidone carboxylic acid. Residues P32, P34, and P36 each carry the 4-hydroxyproline modification. P32, P34, and P36 each carry an O-linked (Ara...) hydroxyproline glycan. A lipid anchor (GPI-anchor amidated serine) is attached at S38. Positions 39 to 63 are cleaved as a propeptide — removed in mature form; the sequence is DGTTIDQGIAYVLMLVALVLTYLIH.

Belongs to the AG-peptide AGP family. Post-translationally, contains 4-hydroxyproline; hydroxylated on Pro-32, Pro-34 and Pro-36. O-glycosylated on hydroxyprolines; noncontiguous hydroxylproline residues are glycosylated with arabinogalactan.

The protein localises to the cell membrane. Its function is as follows. Proteoglycan that seems to be implicated in diverse developmental roles such as differentiation, cell-cell recognition, embryogenesis and programmed cell death. The protein is Arabinogalactan protein 41 of Arabidopsis thaliana (Mouse-ear cress).